We begin with the raw amino-acid sequence, 205 residues long: Type III pantothenate kinase (205 aa).

5–12 serves as a coordination point for ATP; sequence DIGNTTYH. Substrate contacts are provided by residues Y68 and 72–75; that span reads GIDR. The active-site Proton acceptor is D74. D89 is a binding site for K(+). S92 provides a ligand contact to ATP. Residue S144 participates in substrate binding.

This sequence belongs to the type III pantothenate kinase family. As to quaternary structure, homodimer. The cofactor is NH4(+). K(+) serves as cofactor.

The protein resides in the cytoplasm. The catalysed reaction is (R)-pantothenate + ATP = (R)-4'-phosphopantothenate + ADP + H(+). The protein operates within cofactor biosynthesis; coenzyme A biosynthesis; CoA from (R)-pantothenate: step 1/5. Functionally, catalyzes the phosphorylation of pantothenate (Pan), the first step in CoA biosynthesis. This chain is Type III pantothenate kinase, found in Sulfurimonas denitrificans (strain ATCC 33889 / DSM 1251) (Thiomicrospira denitrificans (strain ATCC 33889 / DSM 1251)).